Consider the following 139-residue polypeptide: Maximins 4/H3 type 6 (139 aa).

Residues 1 to 18 (MNFKYIVAVSFLIASAYA) form the signal peptide. Positions 19-43 (RSVQNDEQSLSQRDVLEEESLREIR) are excised as a propeptide. At Asn-70 the chain carries Asparagine amide. A propeptide spanning residues 74–118 (TAEDHEVMKRLEAVMRDLDSLDHPEEASERETRGFNQDEIAKEKR) is cleaved from the precursor. Ile-138 is modified (isoleucine amide).

This sequence belongs to the bombinin family. Expressed by the skin glands.

It is found in the secreted. Maximin-4 shows antibacterial activity against both Gram-positive and Gram-negative bacteria. It also shows antimicrobial activity against the fungus C.albicans, but not against A.flavus nor P.uticale. It has little hemolytic activity. It does not possess a significant cytotoxicity against tumor cell lines. It does not possess a significant anti-HIV activity. In terms of biological role, maximin-H3 shows antibacterial activity against both Gram-positive and Gram-negative bacteria. It also shows antimicrobial activity against the fungus C.albicans. Shows strong hemolytic activity. This is Maximins 4/H3 type 6 from Bombina maxima (Giant fire-bellied toad).